Reading from the N-terminus, the 597-residue chain is MEAEPPLYPMAGAAGPQGDEDLLGVPDGPEAPLDELVGAYPNYNEEEEERRYYRRKRLGVLKNVLAASAGGMLTYGVYLGLLQMQLILHYDETYREVKYGNMGLPDIDSKMLMGINVTPIAALLYTPVLIRFFGTKWMMFLAVGIYALFVSTNYWERYYTLVPSAVALGMAIVPLWASMGNYITRMAQKYHEYSHYKEQDGQGMKQRPPRGSHAPYLLVFQAIFYSFFHLSFACAQLPMIYFLNHYLYDLNHTLYNVQSCGTNSHGILSGFNKTVLRTLPRSGNLIVVESVLMAVAFLAMLLVLGLCGAAYRPTEEIDLRSVGWGNIFQLPFKHVRDYRLRHLVPFFIYSGFEVLFACTGIALGYGVCSVGLERLAYLLVAYSLGASAASLLGLLGLWLPRPVPLVAGAGVHLLLTFILFFWAPVPRVLQHSWILYVAAALWGVGSALNKTGLSTLLGILYEDKERQDFIFTIYHWWQAVAIFTVYLGSSLHMKAKLAVLLVTLVAAAVSYLRMEQKLRRGVAPRQPRIPRPQHKVRGYRYLEEDNSDESDAEGEHGDGAEEEAPPAGPRPGPEPAGLGRRPCPYEQAQGGDGPEEQ.

The segment at 1–29 is disordered; the sequence is MEAEPPLYPMAGAAGPQGDEDLLGVPDGP. 5 consecutive transmembrane segments (helical) span residues 64-84, 110-130, 132-152, 160-180, and 223-243; these read VLAA…LLQM, KMLM…PVLI, FFGT…FVST, TLVP…ASMG, and IFYS…IYFL. Residues N251 and N272 are each glycosylated (N-linked (GlcNAc...) asparagine). A run of 5 helical transmembrane segments spans residues 285-305, 343-363, 378-398, 403-423, and 428-448; these read LIVV…LVLG, LVPF…GIAL, LLVA…LGLW, VPLV…FFWA, and VLQH…GSAL. N449 is a glycosylation site (N-linked (GlcNAc...) asparagine). 2 helical membrane passes run 469–489 and 491–511; these read FIFT…YLGS and LHMK…AVSY. The interval 522 to 597 is disordered; it reads VAPRQPRIPR…AQGGDGPEEQ (76 aa). Residues S547 and S550 each carry the phosphoserine modification.

This sequence belongs to the unc-93 family. Interacts with TLR3, TLR5, TLR7, and TLR9 (probably via transmembrane domain). N-glycosylated. As to expression, expressed in plasmocytoid dendritic cells (at protein level). Highly expressed in antigen-presenting cells. Expressed in heart, and at lower level in kidney. Expressed at low level in other tissues.

Its subcellular location is the endoplasmic reticulum membrane. It is found in the endosome. The protein localises to the lysosome. The protein resides in the cytoplasmic vesicle. It localises to the phagosome. In terms of biological role, plays an important role in innate and adaptive immunity by regulating nucleotide-sensing Toll-like receptor (TLR) signaling. Required for the transport of a subset of TLRs (including TLR3, TLR7 and TLR9) from the endoplasmic reticulum to endolysosomes where they can engage pathogen nucleotides and activate signaling cascades. May play a role in autoreactive B-cells removal. This chain is Protein unc-93 homolog B1, found in Homo sapiens (Human).